An 874-amino-acid chain; its full sequence is Lon protease (874 aa).

Residues 18–261 enclose the Lon N-terminal domain; the sequence is LPVLPLDDAV…RLLTWTKEHL (244 aa). Disordered regions lie at residues 47-68, 120-144, and 298-318; these read VDAA…GISS, GGVR…SGAG, and LSEL…EPAD. Low complexity predominate over residues 124–142; sequence PAPAGTDTTGTGTADATSG. 430-437 is a binding site for ATP; that stretch reads GPPGVGKT. In terms of domain architecture, Lon proteolytic spans 667–851; sequence TALPGVATGL…REVLDLALEP (185 aa). Active-site residues include S757 and K800. The interval 853–874 is disordered; the sequence is FDADHGGRSPGRAGHSPTALAA.

Belongs to the peptidase S16 family. Homohexamer. Organized in a ring with a central cavity.

The protein resides in the cytoplasm. It catalyses the reaction Hydrolysis of proteins in presence of ATP.. Functionally, ATP-dependent serine protease that mediates the selective degradation of mutant and abnormal proteins as well as certain short-lived regulatory proteins. Required for cellular homeostasis and for survival from DNA damage and developmental changes induced by stress. Degrades polypeptides processively to yield small peptide fragments that are 5 to 10 amino acids long. Binds to DNA in a double-stranded, site-specific manner. The sequence is that of Lon protease from Frankia alni (strain DSM 45986 / CECT 9034 / ACN14a).